A 278-amino-acid polypeptide reads, in one-letter code: Digeranylgeranylglyceryl phosphate synthase (278 aa).

Transmembrane regions (helical) follow at residues 12–32, 34–54, 91–111, 142–162, 204–224, 226–246, and 257–277; these read LKNC…ASYF, ISMI…CGFG, LLVV…LMAV, VFIF…LFLC, FLLV…FFGI, YLIS…NLVM, and SRNI…GSLF.

This sequence belongs to the UbiA prenyltransferase family. DGGGP synthase subfamily. Mg(2+) serves as cofactor.

It is found in the cell membrane. The enzyme catalyses sn-3-O-(geranylgeranyl)glycerol 1-phosphate + (2E,6E,10E)-geranylgeranyl diphosphate = 2,3-bis-O-(geranylgeranyl)-sn-glycerol 1-phosphate + diphosphate. Its pathway is membrane lipid metabolism; glycerophospholipid metabolism. Prenyltransferase that catalyzes the transfer of the geranylgeranyl moiety of geranylgeranyl diphosphate (GGPP) to the C2 hydroxyl of (S)-3-O-geranylgeranylglyceryl phosphate (GGGP). This reaction is the second ether-bond-formation step in the biosynthesis of archaeal membrane lipids. This chain is Digeranylgeranylglyceryl phosphate synthase, found in Methanococcus maripaludis (strain C6 / ATCC BAA-1332).